Consider the following 512-residue polypeptide: Probable cytosol aminopeptidase (512 aa).

Mn(2+) is bound by residues Lys-281 and Asp-286. Lys-293 is an active-site residue. Residues Asp-304, Asp-363, and Glu-365 each coordinate Mn(2+). Arg-367 is an active-site residue.

This sequence belongs to the peptidase M17 family. It depends on Mn(2+) as a cofactor.

It is found in the cytoplasm. The catalysed reaction is Release of an N-terminal amino acid, Xaa-|-Yaa-, in which Xaa is preferably Leu, but may be other amino acids including Pro although not Arg or Lys, and Yaa may be Pro. Amino acid amides and methyl esters are also readily hydrolyzed, but rates on arylamides are exceedingly low.. It carries out the reaction Release of an N-terminal amino acid, preferentially leucine, but not glutamic or aspartic acids.. Presumably involved in the processing and regular turnover of intracellular proteins. Catalyzes the removal of unsubstituted N-terminal amino acids from various peptides. This Koribacter versatilis (strain Ellin345) protein is Probable cytosol aminopeptidase.